Consider the following 125-residue polypeptide: Snaclec B7 (125 aa).

3 cysteine pairs are disulfide-bonded: Cys2/Cys13, Cys30/Cys119, and Cys96/Cys111. Residues 9–120 (HEGHCYKVFK…CNISQYFVCQ (112 aa)) enclose the C-type lectin domain. N-linked (GlcNAc...) asparagine glycosylation is present at Asn112.

This sequence belongs to the snaclec family. As to quaternary structure, heterodimer; disulfide-linked. Expressed by the venom gland.

The protein localises to the secreted. In terms of biological role, interferes with one step of hemostasis (modulation of platelet aggregation, or coagulation cascade, for example). The polypeptide is Snaclec B7 (Macrovipera lebetinus (Levantine viper)).